An 83-amino-acid chain; its full sequence is MSGNTGERPFADIITSIRYWVIHSITIPSLFIAGWLFVSTGLAYDVFGSPRPNEYFTESRQEIPLITGRFNSLEQLDEFTRAL.

Residues 21-35 (VIHSITIPSLFIAGW) traverse the membrane as a helical segment. A heme-binding site is contributed by histidine 23.

Belongs to the PsbE/PsbF family. As to quaternary structure, heterodimer of an alpha subunit and a beta subunit. PSII is composed of 1 copy each of membrane proteins PsbA, PsbB, PsbC, PsbD, PsbE, PsbF, PsbH, PsbI, PsbJ, PsbK, PsbL, PsbM, PsbT, PsbX, PsbY, PsbZ, Psb30/Ycf12, at least 3 peripheral proteins of the oxygen-evolving complex and a large number of cofactors. It forms dimeric complexes. Heme b serves as cofactor.

It localises to the plastid. The protein resides in the chloroplast thylakoid membrane. Functionally, this b-type cytochrome is tightly associated with the reaction center of photosystem II (PSII). PSII is a light-driven water:plastoquinone oxidoreductase that uses light energy to abstract electrons from H(2)O, generating O(2) and a proton gradient subsequently used for ATP formation. It consists of a core antenna complex that captures photons, and an electron transfer chain that converts photonic excitation into a charge separation. The sequence is that of Cytochrome b559 subunit alpha from Zygnema circumcarinatum (Green alga).